The sequence spans 444 residues: Tubulin beta chain (444 aa).

Glutamine 11, glutamate 69, serine 138, glycine 142, threonine 143, glycine 144, asparagine 204, and asparagine 226 together coordinate GTP. Residue glutamate 69 coordinates Mg(2+).

It belongs to the tubulin family. As to quaternary structure, dimer of alpha and beta chains. A typical microtubule is a hollow water-filled tube with an outer diameter of 25 nm and an inner diameter of 15 nM. Alpha-beta heterodimers associate head-to-tail to form protofilaments running lengthwise along the microtubule wall with the beta-tubulin subunit facing the microtubule plus end conferring a structural polarity. Microtubules usually have 13 protofilaments but different protofilament numbers can be found in some organisms and specialized cells. Mg(2+) is required as a cofactor.

Its subcellular location is the cytoplasm. It localises to the cytoskeleton. Tubulin is the major constituent of microtubules, a cylinder consisting of laterally associated linear protofilaments composed of alpha- and beta-tubulin heterodimers. Microtubules grow by the addition of GTP-tubulin dimers to the microtubule end, where a stabilizing cap forms. Below the cap, tubulin dimers are in GDP-bound state, owing to GTPase activity of alpha-tubulin. This Onchocerca gibsoni protein is Tubulin beta chain (TBB).